Here is a 313-residue protein sequence, read N- to C-terminus: Porphobilinogen deaminase (313 aa).

Cysteine 241 carries the S-(dipyrrolylmethanemethyl)cysteine modification.

The protein belongs to the HMBS family. In terms of assembly, monomer. The cofactor is dipyrromethane.

It carries out the reaction 4 porphobilinogen + H2O = hydroxymethylbilane + 4 NH4(+). It functions in the pathway porphyrin-containing compound metabolism; protoporphyrin-IX biosynthesis; coproporphyrinogen-III from 5-aminolevulinate: step 2/4. The protein operates within porphyrin-containing compound metabolism; chlorophyll biosynthesis. Its function is as follows. Tetrapolymerization of the monopyrrole PBG into the hydroxymethylbilane pre-uroporphyrinogen in several discrete steps. This chain is Porphobilinogen deaminase, found in Chlorobium phaeobacteroides (strain BS1).